The chain runs to 503 residues: ATP synthase subunit beta (503 aa).

157 to 164 contacts ATP; that stretch reads GGAGVGKT.

The protein belongs to the ATPase alpha/beta chains family. As to quaternary structure, F-type ATPases have 2 components, CF(1) - the catalytic core - and CF(0) - the membrane proton channel. CF(1) has five subunits: alpha(3), beta(3), gamma(1), delta(1), epsilon(1). CF(0) has three main subunits: a(1), b(2) and c(9-12). The alpha and beta chains form an alternating ring which encloses part of the gamma chain. CF(1) is attached to CF(0) by a central stalk formed by the gamma and epsilon chains, while a peripheral stalk is formed by the delta and b chains.

Its subcellular location is the cell inner membrane. It catalyses the reaction ATP + H2O + 4 H(+)(in) = ADP + phosphate + 5 H(+)(out). In terms of biological role, produces ATP from ADP in the presence of a proton gradient across the membrane. The catalytic sites are hosted primarily by the beta subunits. This Flavobacterium psychrophilum (strain ATCC 49511 / DSM 21280 / CIP 103535 / JIP02/86) protein is ATP synthase subunit beta.